The sequence spans 557 residues: Polypyrimidine tract-binding protein 1 (557 aa).

Met1 is subject to N-acetylmethionine. Ser16 carries the phosphoserine modification. RRM domains are found at residues 59–143, 184–260, and 363–437; these read RVIH…SSPN, LRII…FSKL, and SVLL…LSKH. Lys65 participates in a covalent cross-link: Glycyl lysine isopeptide (Lys-Gly) (interchain with G-Cter in SUMO2). Tyr127 bears the Phosphotyrosine mark. Thr138 bears the Phosphothreonine mark. Ser141 is subject to Phosphoserine. Residue Lys218 forms a Glycyl lysine isopeptide (Lys-Gly) (interchain with G-Cter in SUMO2) linkage. The tract at residues 437–460 is disordered; that stretch reads HQSVQLPREGQEDQGLTKDYGNSP. Ser459 is subject to Phosphoserine. The region spanning 480-555 is the RRM 4 domain; sequence ATLHLSNIPP…HHLRVSFSKS (76 aa).

As to quaternary structure, monomer. Part of a ternary complex containing KHSRP, PTBP1, PTBP2 and HNRPH1. Interacts with RAVER1 and SFPQ.

The protein resides in the nucleus. Functionally, plays a role in pre-mRNA splicing and in the regulation of alternative splicing events. Activates exon skipping of its own pre-mRNA during muscle cell differentiation. Binds to the polypyrimidine tract of introns. May promote RNA looping when bound to two separate polypyrimidine tracts in the same pre-mRNA. May promote the binding of U2 snRNP to pre-mRNA. Cooperates with RAVER1 to modulate switching between mutually exclusive exons during maturation of the TPM1 pre-mRNA. Represses the splicing of MAPT/Tau exon 10. Binds to polypyrimidine-rich controlling element (PCE) of CFTR and promotes exon skipping of CFTR exon 9, thereby antagonizing TIA1 and its role in exon inclusion of CFTR exon 9. Plays a role in the splicing of pyruvate kinase PKM by binding repressively to a polypyrimidine tract flanking PKM exon 9, inhibiting exon 9 inclusion and resulting in exon 10 inclusion and production of the PKM M2 isoform. This Bos taurus (Bovine) protein is Polypyrimidine tract-binding protein 1 (PTBP1).